We begin with the raw amino-acid sequence, 841 residues long: Serine/threonine-protein kinase/endoribonuclease IRE1a (841 aa).

Positions 1 to 30 (MPPRCPFLRHLFFLLLLLSPWIMSPCGGAA) are cleaved as a signal peptide. At 31–323 (DDVTYPIVPS…KQKYTYLFGQ (293 aa)) the chain is on the lumenal side. N-linked (GlcNAc...) asparagine glycans are attached at residues Asn100, Asn104, Asn119, Asn132, and Asn221. The helical transmembrane segment at 324 to 344 (WSPVKLLAPLVLLGVVVSVFI) threads the bilayer. Over 345-841 (KKFSSRGSDV…FRKYFKCDII (497 aa)) the chain is Cytoplasmic. Positions 352 to 382 (SDVSLKAGPSKKKKNRKSAKDTNRQSVPRGQ) are disordered. The region spanning 414-704 (FLSSKEIAKG…ATEVLLHPMF (291 aa)) is the Protein kinase domain. Residues 420–428 (IAKGSNGTV) and Lys442 contribute to the ATP site. The active-site Proton acceptor is the Asp570. The KEN domain occupies 707-838 (SEMRLSFLRD…EEVFRKYFKC (132 aa)).

Belongs to the protein kinase superfamily. Ser/Thr protein kinase family. In terms of assembly, homodimer; disulfide-linked. Dimer formation is driven by hydrophobic interactions within the N-terminal luminal domains and stabilized by disulfide bridges. The cofactor is Mg(2+). In terms of processing, autophosphorylated. As to expression, ubiquitous. Detected in the vascular bundles of young plants, leaves, roots, seedlings and in the receptacles of flowers and vascular bundles of the petals.

It is found in the endoplasmic reticulum membrane. It carries out the reaction L-seryl-[protein] + ATP = O-phospho-L-seryl-[protein] + ADP + H(+). It catalyses the reaction L-threonyl-[protein] + ATP = O-phospho-L-threonyl-[protein] + ADP + H(+). Its activity is regulated as follows. The kinase domain is activated by trans-autophosphorylation. Kinase activity is required for activation of the endoribonuclease domain. In terms of biological role, senses unfolded proteins in the lumen of the endoplasmic reticulum via its N-terminal domain which leads to enzyme auto-activation. The active endoribonuclease domain splices bZIP60 mRNA to generate a new C-terminus, converting it into a potent unfolded-protein response transcriptional activator which then induces transcription of UPR target genes. Involved in organ growth regulation. Plays a role in plant immunity and abiotic stress responses. This is Serine/threonine-protein kinase/endoribonuclease IRE1a (IRE1A) from Arabidopsis thaliana (Mouse-ear cress).